The sequence spans 353 residues: Stomatin-like protein 2, mitochondrial (353 aa).

Residues 1–28 (MLARAARGTGALLLRGSVQASGRIPRRA) constitute a mitochondrion transit peptide. Phosphoserine; by PKC/PRKCZ is present on serine 17. Tyrosine 124 carries the phosphotyrosine modification. Lysine 145 is subject to N6-acetyllysine; alternate. N6-succinyllysine; alternate is present on lysine 145. Positions 215-252 (INVAEGKKQAQILASEAEKAEQINQAAGEASAVLAKAK) form a coiled coil. N6-acetyllysine is present on lysine 233. The segment at 324–353 (VPGAQNSSEARRDVQTTDTSIEELGRVKLS) is disordered. A Phosphoserine modification is found at serine 330.

Belongs to the band 7/mec-2 family. As to quaternary structure, forms homooligomers. Interacts with MFN2; may form heterooligomers. Interacts with PHB1 and PHB2; recruits them to cardiolipin-enriched mitochondrial membranes and stabilizes them. Interacts with CACNA2D2.

Its subcellular location is the cell membrane. The protein resides in the mitochondrion. It is found in the mitochondrion inner membrane. The protein localises to the mitochondrion intermembrane space. It localises to the membrane raft. Its subcellular location is the cytoplasm. The protein resides in the cytoskeleton. Functionally, mitochondrial protein that probably regulates the biogenesis and the activity of mitochondria. Stimulates cardiolipin biosynthesis, binds cardiolipin-enriched membranes where it recruits and stabilizes some proteins including prohibitin and may therefore act in the organization of functional microdomains in mitochondrial membranes. Through regulation of the mitochondrial function may play a role into several biological processes including cell migration, cell proliferation, T-cell activation, calcium homeostasis and cellular response to stress. May play a role in calcium homeostasis through negative regulation of calcium efflux from mitochondria. Required for mitochondrial hyperfusion a pro-survival cellular response to stress which results in increased ATP production by mitochondria. May also regulate the organization of functional domains at the plasma membrane and play a role in T-cell activation through association with the T-cell receptor signaling complex and its regulation. This is Stomatin-like protein 2, mitochondrial (Stoml2) from Rattus norvegicus (Rat).